We begin with the raw amino-acid sequence, 130 residues long: Small ribosomal subunit protein uS17m (130 aa).

This sequence belongs to the universal ribosomal protein uS17 family. In terms of assembly, component of the mitochondrial ribosome small subunit (28S) which comprises a 12S rRNA and about 30 distinct proteins.

Its subcellular location is the mitochondrion. The sequence is that of Small ribosomal subunit protein uS17m (MRPS17) from Bos taurus (Bovine).